A 122-amino-acid polypeptide reads, in one-letter code: Large ribosomal subunit protein bL12 (122 aa).

It belongs to the bacterial ribosomal protein bL12 family. Homodimer. Part of the ribosomal stalk of the 50S ribosomal subunit. Forms a multimeric L10(L12)X complex, where L10 forms an elongated spine to which 2 to 4 L12 dimers bind in a sequential fashion. Binds GTP-bound translation factors.

Functionally, forms part of the ribosomal stalk which helps the ribosome interact with GTP-bound translation factors. Is thus essential for accurate translation. This chain is Large ribosomal subunit protein bL12, found in Vibrio parahaemolyticus serotype O3:K6 (strain RIMD 2210633).